Reading from the N-terminus, the 424-residue chain is UDP-N-acetylglucosamine 1-carboxyvinyltransferase (424 aa).

22 to 23 provides a ligand contact to phosphoenolpyruvate; it reads KN. Arginine 93 contacts UDP-N-acetyl-alpha-D-glucosamine. The active-site Proton donor is the cysteine 117. At cysteine 117 the chain carries 2-(S-cysteinyl)pyruvic acid O-phosphothioketal. UDP-N-acetyl-alpha-D-glucosamine contacts are provided by residues 122 to 126, aspartate 307, and isoleucine 329; that span reads RPIDL.

This sequence belongs to the EPSP synthase family. MurA subfamily.

It localises to the cytoplasm. The enzyme catalyses phosphoenolpyruvate + UDP-N-acetyl-alpha-D-glucosamine = UDP-N-acetyl-3-O-(1-carboxyvinyl)-alpha-D-glucosamine + phosphate. Its pathway is cell wall biogenesis; peptidoglycan biosynthesis. Functionally, cell wall formation. Adds enolpyruvyl to UDP-N-acetylglucosamine. The polypeptide is UDP-N-acetylglucosamine 1-carboxyvinyltransferase (Chlorobium phaeovibrioides (strain DSM 265 / 1930) (Prosthecochloris vibrioformis (strain DSM 265))).